The primary structure comprises 102 residues: Small ribosomal subunit protein uS10 (102 aa).

This sequence belongs to the universal ribosomal protein uS10 family. Part of the 30S ribosomal subunit.

Functionally, involved in the binding of tRNA to the ribosomes. The chain is Small ribosomal subunit protein uS10 from Leptospira biflexa serovar Patoc (strain Patoc 1 / Ames).